The chain runs to 378 residues: Cytochrome b (378 aa).

The next 4 helical transmembrane spans lie at Phe-34–Met-54, Trp-78–Val-99, Trp-114–Leu-134, and Phe-179–Leu-199. Residues His-84 and His-98 each contribute to the heme b site. Residues His-183 and His-197 each contribute to the heme b site. His-202 is an a ubiquinone binding site. 4 helical membrane-spanning segments follow: residues Tyr-227–Phe-247, Leu-289–His-309, Leu-321–Ala-341, and Tyr-348–Leu-368.

It belongs to the cytochrome b family. In terms of assembly, the main subunits of complex b-c1 are: cytochrome b, cytochrome c1 and the Rieske protein. It depends on heme b as a cofactor.

Its subcellular location is the mitochondrion inner membrane. Its function is as follows. Component of the ubiquinol-cytochrome c reductase complex (complex III or cytochrome b-c1 complex) that is part of the mitochondrial respiratory chain. The b-c1 complex mediates electron transfer from ubiquinol to cytochrome c. Contributes to the generation of a proton gradient across the mitochondrial membrane that is then used for ATP synthesis. In Anopheles quadrimaculatus (Common malaria mosquito), this protein is Cytochrome b (MT-CYB).